A 2593-amino-acid chain; its full sequence is Citrinin polyketide synthase (2593 aa).

An N-terminal acylcarrier protein transacylase domain (SAT) region spans residues 70 to 224 (KLLENLNAWI…YVSVIVDQRR (155 aa)). The active-site Nucleophile; for transacylase activity is C139. H258 acts as the Proton donor/acceptor; for transacylase activity in catalysis. Positions 391-806 (DERIAVIGMA…GSNASMVVTQ (416 aa)) constitute a Ketosynthase family 3 (KS3) domain. Catalysis depends on for beta-ketoacyl synthase activity residues C555, H690, and H729. The malonyl-CoA:ACP transacylase (MAT) domain stretch occupies residues 906 to 1191 (PDPKPVILCF…VAIWLEAGSN (286 aa)). The segment at 1291–1424 (PKGLTTFVGY…GTITFQAADS (134 aa)) is N-terminal hotdog fold. Residues 1291-1603 (PKGLTTFVGY…YQKVSISGIR (313 aa)) form the PKS/mFAS DH domain. Positions 1322 to 1601 (LLSGHIMANA…ISYQKVSISG (280 aa)) are product template (PT) domain. H1326 acts as the Proton acceptor; for dehydratase activity in catalysis. Residues 1451–1603 (VADDILQGRN…YQKVSISGIR (153 aa)) are C-terminal hotdog fold. The Proton donor; for dehydratase activity role is filled by D1508. A disordered region spans residues 1636-1662 (VADSPLVDGSSTAVSGTPPTKKAPKAP). A Carrier domain is found at 1661–1738 (APSVDITGKM…SLVECMQRIL (78 aa)). S1689 carries the post-translational modification O-(pantetheine 4'-phosphoryl)serine. Residues Y1955, H2067, and E2093 each act as for methyltransferase activity in the active site. The interval 1960-2134 (INAVWIQQAE…ATHWKKILTS (175 aa)) is methyltransferase (CMeT) domain. The interval 2215–2459 (PAPTGHCVLV…KALPDFDGSL (245 aa)) is NADPH-binding (R) domain.

The cofactor is pantetheine 4'-phosphate.

It functions in the pathway mycotoxin biosynthesis. In terms of biological role, non-reducing polyketide synthase; part of the gene cluster that mediates the biosynthesis of the mycotoxin citrinin, a hepato-nephrotoxic compound to humans due to inhibition of respiration complex III. The pathway begins with the synthesis of a keto-aldehyde intermediate by the citrinin PKS (pksCT) from successive condensations of 4 malonyl-CoA units, presumably with a simple acetyl-CoA starter unit. Release of the keto-aldehyde intermediate is consistent with the presence of the C-terminal reductive release domain. Mp11 collaborates with pksCT by catalyzing the hydrolysis of ACP-bound acyl intermediates to free the ACP from stalled intermediates. Mpl2 then catalyzes the oxidation of the C-12 methyl of the ketone intermediate to an alcohol intermediate which is further oxidized by the oxidoreductase mpl7 to produce a bisaldehyde intermediate. The fourth catalytic step is catalyzed by the mpl4 aldehyde dehydrogenase. The final transformation is the reduction of C-3 by mpl6 to provide the chemically stable citrinin nucleus. This chain is Citrinin polyketide synthase, found in Monascus purpureus (Red mold).